A 1001-amino-acid polypeptide reads, in one-letter code: MAPSRRDLQLTPVTGGSSSQISDMEEVGLLDSYHNEANADDILTKIEEGRDVSGLRKIQVGVTGMTCAACSNSVEAALMNVNGVFKASVALLQNRADVVFDPNLVKEEDIKEAIEDAGFEAEILAEEQTQATLVGQFTIGGMTCAACVNSVEGILRDLPGVKRAVVALSTSLGEVEYDPNVINKDDIVNAIEDAGFEGSLVQSNQQDKLVLRVDGILNELDAQVLEGILTRLNGVRQFRLDRISGELEVVFDPEVVSSRSLVDGIEEDGFGKFKLRVMSPYERLSSKDTGEASNMFRRFISSLVLSIPLFFIQVICPHIALFDALLVWRCGPFMMGDWLKWALVSVIQFVIGKRFYVAAWRALRNGSTNMDVLVALGTSASYFYSVGALLYGAVTGFWSPTYFDASAMLITFVLLGKYLESLAKGKTSDAMKKLVQLTPATAILLTEGKGGKLVGEREIDALLIQPGDTLKVHPGAKIPADGVVVWGSSYVNESMVTGESVPVSKEVDSPVIGGTINMHGALHMKATKVGSDAVLSQIISLVETAQMSKAPIQKFADYVASIFVPVVITLALFTLVGWSIGGAVGAYPDEWLPENGTHFVFSLMFSISVVVIACPCALGLATPTAVMVATGVGATNGVLIKGGDALEKAHKVKYVIFDKTGTLTQGKATVTTTKVFSEMDRGEFLTLVASAEASSEHPLAKAIVAYARHFHFFDESTEDGETNNKDLQNSGWLLDTSDFSALPGKGIQCLVNEKMILVGNRKLMSENAINIPDHVEKFVEDLEESGKTGVIVAYNGKLVGVMGIADPLKREAALVVEGLLRMGVRPIMVTGDNWRTARAVAKEVGIEDVRAEVMPAGKADVIRSLQKDGSTVAMVGDGINDSPALAAADVGMAIGAGTDVAIEAADYVLMRNNLEDVITAIDLSRKTLTRIRLNYVFAMAYNVVSIPIAAGVFFPVLRVQLPPWAAGACMALSSVSVVCSSLLLRRYKKPRLTTVLKITTE.

Residues 1–21 (MAPSRRDLQLTPVTGGSSSQI) are disordered. The Cytoplasmic segment spans residues 1-298 (MAPSRRDLQL…TGEASNMFRR (298 aa)). Residues 11–21 (TPVTGGSSSQI) are compositionally biased toward polar residues. HMA domains are found at residues 56–122 (RKIQ…FEAE) and 133–199 (LVGQ…FEGS). Cu(+) contacts are provided by Cys67, Cys70, Cys144, and Cys147. One can recognise an HMA 3; degenerate domain in the interval 207-273 (DKLVLRVDGI…GIEEDGFGKF (67 aa)). A helical membrane pass occupies residues 299–320 (FISSLVLSIPLFFIQVICPHIA). The Extracellular segment spans residues 321–338 (LFDALLVWRCGPFMMGDW). The helical transmembrane segment at 339-358 (LKWALVSVIQFVIGKRFYVA) threads the bilayer. The Cytoplasmic segment spans residues 359–365 (AWRALRN). The chain crosses the membrane as a helical span at residues 366–386 (GSTNMDVLVALGTSASYFYSV). At 387 to 403 (GALLYGAVTGFWSPTYF) the chain is on the extracellular side. Residues 404–424 (DASAMLITFVLLGKYLESLAK) form a helical membrane-spanning segment. Topologically, residues 425–558 (GKTSDAMKKL…KAPIQKFADY (134 aa)) are cytoplasmic. The chain crosses the membrane as a helical span at residues 559–581 (VASIFVPVVITLALFTLVGWSIG). Residues 582 to 602 (GAVGAYPDEWLPENGTHFVFS) are Extracellular-facing. The chain crosses the membrane as a helical span at residues 603–620 (LMFSISVVVIACPCALGL). The Cytoplasmic segment spans residues 621 to 931 (ATPTAVMVAT…DLSRKTLTRI (311 aa)). Asp658 functions as the 4-aspartylphosphate intermediate in the catalytic mechanism. Residues Asp877 and Asp881 each contribute to the Mg(2+) site. A helical membrane pass occupies residues 932-951 (RLNYVFAMAYNVVSIPIAAG). Topologically, residues 952–963 (VFFPVLRVQLPP) are extracellular. Residues 964–982 (WAAGACMALSSVSVVCSSL) traverse the membrane as a helical segment. Residues 983 to 1001 (LLRRYKKPRLTTVLKITTE) are Cytoplasmic-facing.

It belongs to the cation transport ATPase (P-type) (TC 3.A.3) family. Type IB subfamily.

Its subcellular location is the membrane. It catalyses the reaction Cu(+)(in) + ATP + H2O = Cu(+)(out) + ADP + phosphate + H(+). Its function is as follows. Involved in copper import into the cell. Essential for ethylene signaling, which requires copper. Acts by delivering copper to create functional hormone receptors. The polypeptide is Copper-transporting ATPase RAN1 (RAN1) (Arabidopsis thaliana (Mouse-ear cress)).